Here is a 782-residue protein sequence, read N- to C-terminus: Structure-specific endonuclease subunit SLX4 (782 aa).

Disordered stretches follow at residues 63–91 (TPKP…MSAM) and 359–425 (KEHE…KKSK). Over residues 73 to 84 (GLRKTGSRKSKK) the composition is skewed to basic residues. The span at 374 to 388 (PAQSLTQSQVPSSID) shows a compositional bias: polar residues.

Belongs to the SLX4 family. In terms of assembly, forms a heterodimer with SLX1. Post-translationally, phosphorylated in response to DNA damage.

It localises to the nucleus. Regulatory subunit of the SLX1-SLX4 structure-specific endonuclease that resolves DNA secondary structures generated during DNA repair and recombination. Has endonuclease activity towards branched DNA substrates, introducing single-strand cuts in duplex DNA close to junctions with ss-DNA. This chain is Structure-specific endonuclease subunit SLX4, found in Scheffersomyces stipitis (strain ATCC 58785 / CBS 6054 / NBRC 10063 / NRRL Y-11545) (Yeast).